Reading from the N-terminus, the 264-residue chain is Probable aquaporin TIP3-1 (264 aa).

The next 2 membrane-spanning stretches (helical) occupy residues 28 to 48 (AAIS…GSIL) and 62 to 82 (GLVA…AVAV). The NPA 1 signature appears at 90–92 (NPA). The next 3 membrane-spanning stretches (helical) occupy residues 105–125 (LIRA…ATLL), 149–169 (AVLL…ATVI), and 176–196 (VGTI…LAGG). The NPA 2 motif lies at 204 to 206 (NPA). The chain crosses the membrane as a helical span at residues 224 to 244 (YWLGPFVGAGLAGLLYEYLVI).

This sequence belongs to the MIP/aquaporin (TC 1.A.8) family. TIP (TC 1.A.8.10) subfamily. As to expression, expressed in leaves and at lower levels in roots.

The protein localises to the vacuole membrane. Its function is as follows. Aquaporins facilitate the transport of water and small neutral solutes across cell membranes. May be involved in transport from the vacuolar compartment to the cytoplasm. This is Probable aquaporin TIP3-1 (TIP3-1) from Oryza sativa subsp. japonica (Rice).